We begin with the raw amino-acid sequence, 274 residues long: NH(3)-dependent NAD(+) synthetase (274 aa).

An ATP-binding site is contributed by 46 to 53 (GISGGQDS). D52 serves as a coordination point for Mg(2+). A deamido-NAD(+)-binding site is contributed by R140. Position 160 (T160) interacts with ATP. E165 contacts Mg(2+). Residues K173 and D180 each coordinate deamido-NAD(+). Residues K189 and T211 each contribute to the ATP site. A deamido-NAD(+)-binding site is contributed by 260-261 (HK).

Belongs to the NAD synthetase family. As to quaternary structure, homodimer.

The enzyme catalyses deamido-NAD(+) + NH4(+) + ATP = AMP + diphosphate + NAD(+) + H(+). The protein operates within cofactor biosynthesis; NAD(+) biosynthesis; NAD(+) from deamido-NAD(+) (ammonia route): step 1/1. Its function is as follows. Catalyzes the ATP-dependent amidation of deamido-NAD to form NAD. Uses ammonia as a nitrogen source. In Streptococcus equi subsp. equi (strain 4047), this protein is NH(3)-dependent NAD(+) synthetase.